The primary structure comprises 77 residues: Acyl carrier protein (77 aa).

Positions 2–77 (SDIADRVKKI…DAVKFIQGAV (76 aa)) constitute a Carrier domain. Serine 37 carries the post-translational modification O-(pantetheine 4'-phosphoryl)serine.

It belongs to the acyl carrier protein (ACP) family. Post-translationally, 4'-phosphopantetheine is transferred from CoA to a specific serine of apo-ACP by AcpS. This modification is essential for activity because fatty acids are bound in thioester linkage to the sulfhydryl of the prosthetic group.

It localises to the cytoplasm. It participates in lipid metabolism; fatty acid biosynthesis. In terms of biological role, carrier of the growing fatty acid chain in fatty acid biosynthesis. The polypeptide is Acyl carrier protein (Paracoccus denitrificans (strain Pd 1222)).